A 786-amino-acid chain; its full sequence is Signal transducer and activator of transcription 5B (786 aa).

Tyrosine 90 carries the post-translational modification Phosphotyrosine. Serine 128 carries the phosphoserine modification. The SH2 domain occupies 589-686 (WNDGAILGFV…EVYSKYYTPV (98 aa)). A phosphotyrosine mark is found at tyrosine 682 and tyrosine 699.

This sequence belongs to the transcription factor STAT family. In terms of assembly, upon activation, forms a homodimer or a heterodimer with a related family member. Binds NR3C1. Interacts with NCOA1. Interacts with SOCS7. Interacts (via SH2 domain) with INSR. Interacts with CPEB3; this inhibits STAT5B-mediated transcriptional activation. Tyrosine phosphorylated in response to signaling via activated KIT, resulting in translocation to the nucleus. Tyrosine phosphorylated in response to signaling via activated FLT3; wild-type FLT3 results in much weaker phosphorylation than constitutively activated mutant FLT3. Alternatively, can be phosphorylated by JAK2. Phosphorylation at Tyr-699 by PTK6 or HCK leads to an increase of its transcriptional activity. In terms of tissue distribution, in the virgin, found in most tissues. Particularly abundant in muscle tissue of virgin and lactating females, and of males.

The protein resides in the cytoplasm. The protein localises to the nucleus. In terms of biological role, carries out a dual function: signal transduction and activation of transcription. Mediates cellular responses to the cytokine KITLG/SCF and other growth factors. Binds to the GAS element and activates PRL-induced transcription. Positively regulates hematopoietic/erythroid differentiation. The polypeptide is Signal transducer and activator of transcription 5B (Stat5b) (Mus musculus (Mouse)).